The chain runs to 173 residues: Putative metal-dependent hydrolase BcerKBAB4_2443 (173 aa).

The Zn(2+) site is built by histidine 65, histidine 156, and histidine 160.

This sequence belongs to the metal hydrolase YfiT family. Homodimer. Zn(2+) is required as a cofactor.

The protein resides in the cytoplasm. Possible metal-dependent hydrolase. The chain is Putative metal-dependent hydrolase BcerKBAB4_2443 from Bacillus mycoides (strain KBAB4) (Bacillus weihenstephanensis).